Reading from the N-terminus, the 455-residue chain is Vimentin (455 aa).

The head stretch occupies residues 1-87; the sequence is MASRTNTSSY…GLADAINTEF (87 aa). The stretch at 87–122 forms a coiled coil; that stretch reads FKTNRTNEKAEMQHLNDRFASYIDKVRFLEQQNKIL. Residues 88 to 122 form a coil 1A region; that stretch reads KTNRTNEKAEMQHLNDRFASYIDKVRFLEQQNKIL. The 309-residue stretch at 94 to 402 folds into the IF rod domain; sequence EKAEMQHLND…KLLEGEESRI (309 aa). Positions 123-144 are linker 1; the sequence is IAELEQMRGKGSSRVGDLYQDE. A coiled-coil region spans residues 145 to 236; that stretch reads MRELRRQVDQ…KLHDEELAEL (92 aa). Residues 145–236 form a coil 1B region; it reads MRELRRQVDQ…KLHDEELAEL (92 aa). A linker 12 region spans residues 237–259; that stretch reads QIQIQEQHVQIDMEVAKPDLTAA. Positions 260-398 are coil 2; that stretch reads LKDVRQQYET…ATYRKLLEGE (139 aa). Residues 294–398 are a coiled coil; sequence ARNNEAIRLA…ATYRKLLEGE (105 aa). Positions 399 to 455 are tail; sequence ESRITTPFPNLSSLTLRETMKETRPAMDSLSKKVVIKTIETRDGHIINESSQNDDLE.

This sequence belongs to the intermediate filament family. Homomer assembled from elementary dimers. Post-translationally, one of the most prominent phosphoproteins in various cells of mesenchymal origin. Phosphorylation is enhanced during cell division, at which time vimentin filaments are significantly reorganized.

The protein localises to the cytoplasm. It localises to the cytoskeleton. Its subcellular location is the nucleus matrix. Vimentins are class-III intermediate filaments found in various non-epithelial cells, especially mesenchymal cells. Vimentin is attached to the nucleus, endoplasmic reticulum, and mitochondria, either laterally or terminally. The polypeptide is Vimentin (vim) (Cyprinus carpio (Common carp)).